Consider the following 94-residue polypeptide: Large ribosomal subunit protein uL23 (94 aa).

This sequence belongs to the universal ribosomal protein uL23 family. In terms of assembly, part of the 50S ribosomal subunit. Contacts protein L29, and trigger factor when it is bound to the ribosome.

In terms of biological role, one of the early assembly proteins it binds 23S rRNA. One of the proteins that surrounds the polypeptide exit tunnel on the outside of the ribosome. Forms the main docking site for trigger factor binding to the ribosome. The protein is Large ribosomal subunit protein uL23 of Phytoplasma australiense.